The primary structure comprises 283 residues: Ribose-phosphate pyrophosphokinase (283 aa).

ATP-binding positions include 34–36 (DGE) and 89–90 (RQ). The Mg(2+) site is built by His-120 and Asp-159. Lys-182 is a catalytic residue. 2 residues coordinate D-ribose 5-phosphate: Arg-184 and Asp-208.

Belongs to the ribose-phosphate pyrophosphokinase family. Class III (archaeal) subfamily. Mg(2+) serves as cofactor.

It localises to the cytoplasm. The enzyme catalyses D-ribose 5-phosphate + ATP = 5-phospho-alpha-D-ribose 1-diphosphate + AMP + H(+). Its pathway is metabolic intermediate biosynthesis; 5-phospho-alpha-D-ribose 1-diphosphate biosynthesis; 5-phospho-alpha-D-ribose 1-diphosphate from D-ribose 5-phosphate (route I): step 1/1. Its function is as follows. Involved in the biosynthesis of the central metabolite phospho-alpha-D-ribosyl-1-pyrophosphate (PRPP) via the transfer of pyrophosphoryl group from ATP to 1-hydroxyl of ribose-5-phosphate (Rib-5-P). The polypeptide is Ribose-phosphate pyrophosphokinase (Methanosarcina acetivorans (strain ATCC 35395 / DSM 2834 / JCM 12185 / C2A)).